The primary structure comprises 279 residues: Urease accessory protein UreD (279 aa).

This sequence belongs to the UreD family. As to quaternary structure, ureD, UreF and UreG form a complex that acts as a GTP-hydrolysis-dependent molecular chaperone, activating the urease apoprotein by helping to assemble the nickel containing metallocenter of UreC. The UreE protein probably delivers the nickel.

Its subcellular location is the cytoplasm. Required for maturation of urease via the functional incorporation of the urease nickel metallocenter. In Nostoc sp. (strain PCC 7120 / SAG 25.82 / UTEX 2576), this protein is Urease accessory protein UreD.